We begin with the raw amino-acid sequence, 96 residues long: Co-chaperonin GroES (96 aa).

Belongs to the GroES chaperonin family. As to quaternary structure, heptamer of 7 subunits arranged in a ring. Interacts with the chaperonin GroEL.

It localises to the cytoplasm. Together with the chaperonin GroEL, plays an essential role in assisting protein folding. The GroEL-GroES system forms a nano-cage that allows encapsulation of the non-native substrate proteins and provides a physical environment optimized to promote and accelerate protein folding. GroES binds to the apical surface of the GroEL ring, thereby capping the opening of the GroEL channel. The protein is Co-chaperonin GroES of Legionella jeonii.